A 159-amino-acid chain; its full sequence is Ribosomal RNA large subunit methyltransferase H (159 aa).

S-adenosyl-L-methionine-binding positions include Leu76, Gly108, and 127–132; that span reads FSKMTF.

Belongs to the RNA methyltransferase RlmH family. In terms of assembly, homodimer.

The protein resides in the cytoplasm. It catalyses the reaction pseudouridine(1915) in 23S rRNA + S-adenosyl-L-methionine = N(3)-methylpseudouridine(1915) in 23S rRNA + S-adenosyl-L-homocysteine + H(+). Its function is as follows. Specifically methylates the pseudouridine at position 1915 (m3Psi1915) in 23S rRNA. The polypeptide is Ribosomal RNA large subunit methyltransferase H (Clostridium botulinum (strain Eklund 17B / Type B)).